The primary structure comprises 354 residues: Histidinol-phosphate aminotransferase (354 aa).

Lys215 is subject to N6-(pyridoxal phosphate)lysine.

It belongs to the class-II pyridoxal-phosphate-dependent aminotransferase family. Histidinol-phosphate aminotransferase subfamily. As to quaternary structure, homodimer. Requires pyridoxal 5'-phosphate as cofactor.

It carries out the reaction L-histidinol phosphate + 2-oxoglutarate = 3-(imidazol-4-yl)-2-oxopropyl phosphate + L-glutamate. The protein operates within amino-acid biosynthesis; L-histidine biosynthesis; L-histidine from 5-phospho-alpha-D-ribose 1-diphosphate: step 7/9. This Vesicomyosocius okutanii subsp. Calyptogena okutanii (strain HA) protein is Histidinol-phosphate aminotransferase.